The primary structure comprises 155 residues: Transcriptional repressor NrdR (155 aa).

A zinc finger lies at Cys-3–Cys-34. An ATP-cone domain is found at Pro-49–Glu-139.

Belongs to the NrdR family. Zn(2+) serves as cofactor.

Its function is as follows. Negatively regulates transcription of bacterial ribonucleotide reductase nrd genes and operons by binding to NrdR-boxes. The protein is Transcriptional repressor NrdR of Janthinobacterium sp. (strain Marseille) (Minibacterium massiliensis).